The primary structure comprises 596 residues: MRRMDRWTVCRRLASMARPVSFLEAALMAVVAACIVLGKWFDVMSIKRRGLIINGLKDIKGMGSANVSSIYGDAAAFLVLRTLSSAFTESKAILFSAVTNRVVQASTSRILDLTMHAAHSCEIKPTELNRIVERGNRKISKVLVKTLTVATPALFRLALLFREVHAMFGPKYLVPILFTAAAYAAYTCVMLRIRARYRKEINNADNSVSRRIHECVSNVDLVRACCSEQFEVSRLAGEMETMWALKLSDKGCVGMTNLGQRALFSVLFVHVAFKGIADMAALRMTVGDLSVLFSFVLSIDASMWTLGGIARDLGFWLTDCTDLLCLHDGLERAAEQGPGAGAAAEGMAACPSSPPGEAAAVEFDDVSFAYPRSAAYPRSAHVLSGVSFRIMRGERVGIIGRPGSGKSTILRLILMLHRHKGRIRVNGAELWSASPRAVRGSIGCILQDGLLFDESILYNVMYGCPRAGFHRVLRECKNAGLSDVVRRKGLHSRMKALSGGEMQMVSLARCFLKDAPLMLLDEATSKLDAETERDVFGLMMGMRGKTIVMVLHDLWMTEHLDRVILVDSGTVKEVGTHSELMGLRGMYWRMKTASRE.

Transmembrane regions (helical) follow at residues 26-46 (ALMA…VMSI), 173-193 (LVPI…MLRI), and 289-309 (LSVL…LGGI). The ABC transmembrane type-1 domain occupies 39 to 318 (KWFDVMSIKR…IARDLGFWLT (280 aa)). In terms of domain architecture, ABC transporter spans 361 to 593 (VEFDDVSFAY…RGMYWRMKTA (233 aa)). Residues Tyr370 and 400–411 (GRPGSGKSTILR) contribute to the ATP site.

It belongs to the ABC transporter superfamily. ABCB family. Heavy Metal importer (TC 3.A.1.210) subfamily.

The protein resides in the membrane. This is Probable ABC transporter ECU01_0200/ECU01_1410 from Encephalitozoon cuniculi (strain GB-M1) (Microsporidian parasite).